A 132-amino-acid polypeptide reads, in one-letter code: S-protein homolog 8 (132 aa).

An N-terminal signal peptide occupies residues 1–20 (MHSLSWFLLVIGLSVGLSSG).

This sequence belongs to the plant self-incompatibility (S1) protein family. Mostly expressed in seedlings, stems, leaves and floral tissues, and, to a lower extent, in roots.

The protein resides in the secreted. This is S-protein homolog 8 from Arabidopsis thaliana (Mouse-ear cress).